Reading from the N-terminus, the 123-residue chain is Large ribosomal subunit protein bL12 (123 aa).

Belongs to the bacterial ribosomal protein bL12 family. Homodimer. Part of the ribosomal stalk of the 50S ribosomal subunit. Forms a multimeric L10(L12)X complex, where L10 forms an elongated spine to which 2 to 4 L12 dimers bind in a sequential fashion. Binds GTP-bound translation factors.

Forms part of the ribosomal stalk which helps the ribosome interact with GTP-bound translation factors. Is thus essential for accurate translation. The polypeptide is Large ribosomal subunit protein bL12 (Neisseria gonorrhoeae (strain NCCP11945)).